The following is a 443-amino-acid chain: MEKIIVSGGHQLNGTVRLEGAKNAVLPVLAASLIASEGESVIKEVPVLADVYTINEVLRNLNAEVEFDSTTKTVNINASQQLETEAPFEYVRKMRASVLVLGPLLARYGHAKVAMPGGCAIGSRPIDLHLKGFEAMGAEIHVGNGYVEANVNGRLQGAKIYLDMPSVGATENIMMAAALAEGKTVIENAAKEPEIVDLANYLNKMGANIVGAGTETIRIIGVEKLRGTEHMIIPDRIEAGTFMVASAITGGNVFIENAMREHLRSVISKLEEMNVDVIDENGGLRIIGPEKLKSTDIKTLPHPGFPTDMQSQMMSLMLRAEGTGVITETVFENRFMHVEEFRRMNANIKIEGRSVIIEGISELQGAEVAATDLRAAAALILAGLVSDGYTRVTELKHLDRGYVDIVDKLAALGADIKRVDENGVVVQPLYVTAAKESNEIAAD.

22 to 23 (KN) is a binding site for phosphoenolpyruvate. Arginine 95 contacts UDP-N-acetyl-alpha-D-glucosamine. Cysteine 119 serves as the catalytic Proton donor. At cysteine 119 the chain carries 2-(S-cysteinyl)pyruvic acid O-phosphothioketal. UDP-N-acetyl-alpha-D-glucosamine-binding positions include 124–128 (RPIDL), aspartate 308, and valine 330.

Belongs to the EPSP synthase family. MurA subfamily.

The protein localises to the cytoplasm. It carries out the reaction phosphoenolpyruvate + UDP-N-acetyl-alpha-D-glucosamine = UDP-N-acetyl-3-O-(1-carboxyvinyl)-alpha-D-glucosamine + phosphate. Its pathway is cell wall biogenesis; peptidoglycan biosynthesis. Functionally, cell wall formation. Adds enolpyruvyl to UDP-N-acetylglucosamine. This is UDP-N-acetylglucosamine 1-carboxyvinyltransferase 1 from Oceanobacillus iheyensis (strain DSM 14371 / CIP 107618 / JCM 11309 / KCTC 3954 / HTE831).